We begin with the raw amino-acid sequence, 75 residues long: ATP synthase subunit 9, mitochondrial (75 aa).

2 helical membrane passes run 10–30 and 55–75; these read LVLG…GILF and FALV…VYFI.

Belongs to the ATPase C chain family. F-type ATPases have 2 components, CF(1) - the catalytic core - and CF(0) - the membrane proton channel. CF(1) has five subunits: alpha(3), beta(3), gamma(1), delta(1), epsilon(1). CF(0) has three main subunits: a, b and c.

The protein localises to the mitochondrion membrane. Functionally, mitochondrial membrane ATP synthase (F(1)F(0) ATP synthase or Complex V) produces ATP from ADP in the presence of a proton gradient across the membrane which is generated by electron transport complexes of the respiratory chain. F-type ATPases consist of two structural domains, F(1) - containing the extramembraneous catalytic core and F(0) - containing the membrane proton channel, linked together by a central stalk and a peripheral stalk. During catalysis, ATP synthesis in the catalytic domain of F(1) is coupled via a rotary mechanism of the central stalk subunits to proton translocation. Part of the complex F(0) domain. A homomeric c-ring of probably 10 subunits is part of the complex rotary element. The chain is ATP synthase subunit 9, mitochondrial (ATP9) from Paramecium tetraurelia.